The following is a 644-amino-acid chain: Threonine--tRNA ligase (644 aa).

A TGS domain is found at 1 to 62; the sequence is MSFSVTLPDG…DSDVEIAIIT (62 aa). The catalytic stretch occupies residues 240–538; the sequence is DHRTIGRDLD…LTEIYKGAFP (299 aa). Zn(2+)-binding residues include cysteine 334, histidine 385, and histidine 515.

The protein belongs to the class-II aminoacyl-tRNA synthetase family. As to quaternary structure, homodimer. Requires Zn(2+) as cofactor.

Its subcellular location is the cytoplasm. The enzyme catalyses tRNA(Thr) + L-threonine + ATP = L-threonyl-tRNA(Thr) + AMP + diphosphate + H(+). Catalyzes the attachment of threonine to tRNA(Thr) in a two-step reaction: L-threonine is first activated by ATP to form Thr-AMP and then transferred to the acceptor end of tRNA(Thr). Also edits incorrectly charged L-seryl-tRNA(Thr). This chain is Threonine--tRNA ligase, found in Lactobacillus acidophilus (strain ATCC 700396 / NCK56 / N2 / NCFM).